A 412-amino-acid chain; its full sequence is cAMP-dependent protein kinase regulatory subunit (412 aa).

Residues M1 to P11 are compositionally biased toward polar residues. The disordered stretch occupies residues M1–E146. Positions S16–A29 are enriched in basic and acidic residues. The segment at S23–F159 is dimerization and phosphorylation. Polar residues-rich tracts occupy residues N49 to L60 and T119 to P138. The residue at position 120 (S120) is a Phosphoserine. Residues L160 to P291, E238, R247, L292 to S405, E359, and R368 each bind 3',5'-cyclic AMP.

It belongs to the cAMP-dependent kinase regulatory chain family. Tetramer, composed of 2 regulatory (R) and 2 catalytic (C) subunits. In the presence of cAMP it dissociates into 2 active monomeric C subunits and an R dimer.

The sequence is that of cAMP-dependent protein kinase regulatory subunit (pkaR) from Emericella nidulans (strain FGSC A4 / ATCC 38163 / CBS 112.46 / NRRL 194 / M139) (Aspergillus nidulans).